We begin with the raw amino-acid sequence, 75 residues long: U6-lycotoxin-Ls1c (75 aa).

The N-terminal stretch at 1–21 is a signal peptide; that stretch reads MKLLLFTALVLVVISLIEVEA. Positions 22–25 are excised as a propeptide; sequence ENER. 4 cysteine pairs are disulfide-bonded: Cys-27/Cys-42, Cys-34/Cys-47, Cys-41/Cys-65, and Cys-49/Cys-63.

The protein belongs to the neurotoxin 19 (CSTX) family. 06 (U6-Lctx) subfamily. Expressed by the venom gland.

The protein resides in the secreted. The sequence is that of U6-lycotoxin-Ls1c from Lycosa singoriensis (Wolf spider).